The following is a 412-amino-acid chain: Subtilisin-like protease 6 (412 aa).

A signal peptide spans 1 to 20 (MGFITKAIPIVLAALSTVNG). A propeptide spanning residues 21 to 127 (ARILEAGPHA…VRATTNGTNL (107 aa)) is cleaved from the precursor. The 85-residue stretch at 36–120 (KYIVVMKKDV…FIEPDFVVRA (85 aa)) folds into the Inhibitor I9 domain. 2 N-linked (GlcNAc...) asparagine glycosylation sites follow: Asn123 and Asn126. One can recognise a Peptidase S8 domain in the interval 135 to 412 (SWGLARVSTR…SKLIYNGSGK (278 aa)). Active-site charge relay system residues include Asp167 and His198. Residues Asn252, Asn264, and Asn325 are each glycosylated (N-linked (GlcNAc...) asparagine). Ser358 functions as the Charge relay system in the catalytic mechanism. The N-linked (GlcNAc...) asparagine glycan is linked to Asn408.

The protein belongs to the peptidase S8 family.

The protein resides in the secreted. Secreted subtilisin-like serine protease with keratinolytic activity that contributes to pathogenicity. This Trichophyton verrucosum (Cattle ringworm fungus) protein is Subtilisin-like protease 6 (SUB6).